The chain runs to 373 residues: Protein CAF40 (373 aa).

A disordered region spans residues 1 to 91; that stretch reads MFSAQKPIYG…ANATRNNPNM (91 aa). The span at 11 to 22 shows a compositional bias: gly residues; sequence NGAGVNMGGGGP. Positions 50–88 are enriched in low complexity; the sequence is GGPMLMGNTPNNNNSNENGENNGNNGNNGGNDANATRNN.

This sequence belongs to the CNOT9 family. Subunit of the 1.0 MDa CCR4-NOT core complex that contains CCR4, CAF1, NOT1, NOT2, NOT3, NOT4, NOT5, CAF40 and CAF130. In the complex interacts with NOT1. The core complex probably is part of a less characterized 1.9 MDa CCR4-NOT complex.

Its subcellular location is the cytoplasm. It is found in the nucleus. Acts as a component of the CCR4-NOT core complex, which in the nucleus seems to be a general transcription factor, and in the cytoplasm the major mRNA deadenylase involved in mRNA turnover. This chain is Protein CAF40 (CAF40), found in Saccharomyces cerevisiae (strain ATCC 204508 / S288c) (Baker's yeast).